We begin with the raw amino-acid sequence, 383 residues long: Spermidine/putrescine import ATP-binding protein PotA (383 aa).

The region spanning 12–246 is the ABC transporter domain; sequence IALRDISKVY…PSTPFVAGFI (235 aa). Position 48 to 55 (48 to 55) interacts with ATP; that stretch reads GPSGCGKT.

It belongs to the ABC transporter superfamily. Spermidine/putrescine importer (TC 3.A.1.11.1) family. As to quaternary structure, the complex is composed of two ATP-binding proteins (PotA), two transmembrane proteins (PotB and PotC) and a solute-binding protein (PotD).

Its subcellular location is the cell membrane. The catalysed reaction is ATP + H2O + polyamine-[polyamine-binding protein]Side 1 = ADP + phosphate + polyamineSide 2 + [polyamine-binding protein]Side 1.. Its function is as follows. Part of the ABC transporter complex PotABCD involved in spermidine/putrescine import. Responsible for energy coupling to the transport system. This chain is Spermidine/putrescine import ATP-binding protein PotA, found in Acidothermus cellulolyticus (strain ATCC 43068 / DSM 8971 / 11B).